We begin with the raw amino-acid sequence, 630 residues long: Transferrin-binding protein B (630 aa).

A signal peptide spans 1-17 (MKSVPLITGGLSFLLSA). A lipid anchor (N-palmitoyl cysteine) is attached at cysteine 18. The S-diacylglycerol cysteine moiety is linked to residue cysteine 18. 3 disordered regions span residues 26–53 (DVDDVSNPSSSKPRYQDDTSSSRTKSNL), 280–301 (VTPTKSTSDEHPFTSEGTLEGG), and 591–613 (NNPTATNSESSSTVPSPPNSPNA). The segment covering 32-50 (NPSSSKPRYQDDTSSSRTK) has biased composition (polar residues).

Belongs to the TbpB family.

Its subcellular location is the cell outer membrane. The protein localises to the cell surface. Its function is as follows. Haemophilus acquires iron by extracting it from serum transferrin (TF) in its human host. Acts as a transferrin receptor and is required for transferrin utilization. The polypeptide is Transferrin-binding protein B (Haemophilus influenzae (strain 86-028NP)).